The sequence spans 289 residues: uncharacterized protein (289 aa).

This is an uncharacterized protein from Drosophila melanogaster (Fruit fly).